Here is a 95-residue protein sequence, read N- to C-terminus: Large ribosomal subunit protein bL25 (95 aa).

This sequence belongs to the bacterial ribosomal protein bL25 family. As to quaternary structure, part of the 50S ribosomal subunit; part of the 5S rRNA/L5/L18/L25 subcomplex. Contacts the 5S rRNA. Binds to the 5S rRNA independently of L5 and L18.

This is one of the proteins that binds to the 5S RNA in the ribosome where it forms part of the central protuberance. This is Large ribosomal subunit protein bL25 from Actinobacillus pleuropneumoniae serotype 3 (strain JL03).